A 141-amino-acid polypeptide reads, in one-letter code: Pyrophosphate-energized proton pump (141 aa).

3 helical membrane-spanning segments follow: residues 11 to 31, 46 to 66, and 121 to 141; these read GLIATGLLSIVGLGVANTLTV, GTNLFVCGLIGLIVTGLIVVI, and LAGLFGTAIAVTAMLGIAGMI.

The protein belongs to the H(+)-translocating pyrophosphatase (TC 3.A.10) family. Homodimer. The cofactor is Mg(2+).

It is found in the cell inner membrane. The catalysed reaction is diphosphate + H2O + H(+)(in) = 2 phosphate + 2 H(+)(out). In terms of biological role, proton pump that utilizes the energy of pyrophosphate hydrolysis as the driving force for proton movement across the membrane. Generates a proton motive force. This Anaplasma marginale protein is Pyrophosphate-energized proton pump (hppA).